The sequence spans 376 residues: Aspartate-semialdehyde dehydrogenase (376 aa).

Residues 11–14 (RGMV), 38–39 (TS), and Gln74 contribute to the NADP(+) site. Arg103 is a binding site for phosphate. Cys136 (acyl-thioester intermediate) is an active-site residue. Gln163 lines the substrate pocket. NADP(+) contacts are provided by residues 166–167 (SG) and Pro194. Glu242 lines the substrate pocket. Lys245 contacts phosphate. Residue Arg273 coordinates substrate. The Proton acceptor role is filled by His280. An NADP(+)-binding site is contributed by Gln356.

The protein belongs to the aspartate-semialdehyde dehydrogenase family. As to quaternary structure, homodimer.

The catalysed reaction is L-aspartate 4-semialdehyde + phosphate + NADP(+) = 4-phospho-L-aspartate + NADPH + H(+). Its pathway is amino-acid biosynthesis; L-lysine biosynthesis via DAP pathway; (S)-tetrahydrodipicolinate from L-aspartate: step 2/4. It functions in the pathway amino-acid biosynthesis; L-methionine biosynthesis via de novo pathway; L-homoserine from L-aspartate: step 2/3. The protein operates within amino-acid biosynthesis; L-threonine biosynthesis; L-threonine from L-aspartate: step 2/5. Its function is as follows. Catalyzes the NADPH-dependent formation of L-aspartate-semialdehyde (L-ASA) by the reductive dephosphorylation of L-aspartyl-4-phosphate. In Bordetella pertussis (strain Tohama I / ATCC BAA-589 / NCTC 13251), this protein is Aspartate-semialdehyde dehydrogenase.